A 280-amino-acid chain; its full sequence is Release factor glutamine methyltransferase (280 aa).

S-adenosyl-L-methionine contacts are provided by residues 120 to 124 (GTGSG), D143, and N186. Residue 186 to 189 (NPPY) coordinates substrate.

This sequence belongs to the protein N5-glutamine methyltransferase family. PrmC subfamily.

It carries out the reaction L-glutaminyl-[peptide chain release factor] + S-adenosyl-L-methionine = N(5)-methyl-L-glutaminyl-[peptide chain release factor] + S-adenosyl-L-homocysteine + H(+). In terms of biological role, methylates the class 1 translation termination release factors RF1/PrfA and RF2/PrfB on the glutamine residue of the universally conserved GGQ motif. This Koribacter versatilis (strain Ellin345) protein is Release factor glutamine methyltransferase.